Reading from the N-terminus, the 364-residue chain is Aminomethyltransferase (364 aa).

It belongs to the GcvT family. As to quaternary structure, the glycine cleavage system is composed of four proteins: P, T, L and H.

The catalysed reaction is N(6)-[(R)-S(8)-aminomethyldihydrolipoyl]-L-lysyl-[protein] + (6S)-5,6,7,8-tetrahydrofolate = N(6)-[(R)-dihydrolipoyl]-L-lysyl-[protein] + (6R)-5,10-methylene-5,6,7,8-tetrahydrofolate + NH4(+). Functionally, the glycine cleavage system catalyzes the degradation of glycine. This Thermotoga sp. (strain RQ2) protein is Aminomethyltransferase.